The primary structure comprises 498 residues: Glycerol kinase (498 aa).

An ADP-binding site is contributed by Thr-13. ATP-binding residues include Thr-13, Thr-14, and Ser-15. Thr-13 provides a ligand contact to sn-glycerol 3-phosphate. Arg-17 contacts ADP. Residues Arg-83, Glu-84, Tyr-135, and Asp-244 each coordinate sn-glycerol 3-phosphate. Glycerol-binding residues include Arg-83, Glu-84, Tyr-135, Asp-244, and Gln-245. Residues Thr-266 and Gly-309 each coordinate ADP. 4 residues coordinate ATP: Thr-266, Gly-309, Gln-313, and Gly-410. ADP is bound by residues Gly-410 and Asn-414.

It belongs to the FGGY kinase family.

The enzyme catalyses glycerol + ATP = sn-glycerol 3-phosphate + ADP + H(+). Its pathway is polyol metabolism; glycerol degradation via glycerol kinase pathway; sn-glycerol 3-phosphate from glycerol: step 1/1. Inhibited by fructose 1,6-bisphosphate (FBP). In terms of biological role, key enzyme in the regulation of glycerol uptake and metabolism. Catalyzes the phosphorylation of glycerol to yield sn-glycerol 3-phosphate. The polypeptide is Glycerol kinase (Koribacter versatilis (strain Ellin345)).